Reading from the N-terminus, the 212-residue chain is Pyridoxine/pyridoxamine 5'-phosphate oxidase (212 aa).

Residues 8–11 and Lys66 contribute to the substrate site; that span reads RREY. FMN is bound by residues 61-66, 76-77, Arg82, Lys83, and Gln105; these read RIVLLK and FT. Substrate contacts are provided by Tyr123, Arg127, and Ser131. FMN is bound by residues 140-141 and Trp185; that span reads QS. 191 to 193 is a binding site for substrate; it reads RLH. FMN is bound at residue Arg195.

This sequence belongs to the pyridoxamine 5'-phosphate oxidase family. Homodimer. It depends on FMN as a cofactor.

It catalyses the reaction pyridoxamine 5'-phosphate + O2 + H2O = pyridoxal 5'-phosphate + H2O2 + NH4(+). It carries out the reaction pyridoxine 5'-phosphate + O2 = pyridoxal 5'-phosphate + H2O2. The protein operates within cofactor metabolism; pyridoxal 5'-phosphate salvage; pyridoxal 5'-phosphate from pyridoxamine 5'-phosphate: step 1/1. It functions in the pathway cofactor metabolism; pyridoxal 5'-phosphate salvage; pyridoxal 5'-phosphate from pyridoxine 5'-phosphate: step 1/1. Its function is as follows. Catalyzes the oxidation of either pyridoxine 5'-phosphate (PNP) or pyridoxamine 5'-phosphate (PMP) into pyridoxal 5'-phosphate (PLP). This is Pyridoxine/pyridoxamine 5'-phosphate oxidase from Shewanella frigidimarina (strain NCIMB 400).